Consider the following 135-residue polypeptide: Small ribosomal subunit protein uS8 (135 aa).

Belongs to the universal ribosomal protein uS8 family. As to quaternary structure, part of the 30S ribosomal subunit. Contacts proteins S5 and S12.

Functionally, one of the primary rRNA binding proteins, it binds directly to 16S rRNA central domain where it helps coordinate assembly of the platform of the 30S subunit. This is Small ribosomal subunit protein uS8 from Parafrankia sp. (strain EAN1pec).